A 267-amino-acid polypeptide reads, in one-letter code: tRNA pseudouridine synthase A (267 aa).

Asp-53 serves as the catalytic Nucleophile. Residue Tyr-111 coordinates substrate.

This sequence belongs to the tRNA pseudouridine synthase TruA family. In terms of assembly, homodimer.

The catalysed reaction is uridine(38/39/40) in tRNA = pseudouridine(38/39/40) in tRNA. Formation of pseudouridine at positions 38, 39 and 40 in the anticodon stem and loop of transfer RNAs. This Alcanivorax borkumensis (strain ATCC 700651 / DSM 11573 / NCIMB 13689 / SK2) protein is tRNA pseudouridine synthase A.